Consider the following 210-residue polypeptide: MSSIKSLTTRQQEVFDLIKRHIESTGMPPTRVEISKELGFRSPNAAEEHLKALARKGVIEIVSGVSRGIRLLTDIEEPENEGLPLIGRVAAGEPILAEQHIEATYQVDANMFKPQADFLLKVYGQSMKDIGILDGDLLAVHSTKDIRNGQIVVARIEDEVTVKRFERKGSVVYLHAENEEFEPIVVDLTQQPYFEIEGIAVGIIRNNAWM.

The H-T-H motif DNA-binding region spans Arg-31–Lys-51. Residues Ser-126 and Lys-163 each act as for autocatalytic cleavage activity in the active site.

The protein belongs to the peptidase S24 family. As to quaternary structure, homodimer.

The enzyme catalyses Hydrolysis of Ala-|-Gly bond in repressor LexA.. Represses a number of genes involved in the response to DNA damage (SOS response), including recA and lexA. In the presence of single-stranded DNA, RecA interacts with LexA causing an autocatalytic cleavage which disrupts the DNA-binding part of LexA, leading to derepression of the SOS regulon and eventually DNA repair. This Histophilus somni (strain 129Pt) (Haemophilus somnus) protein is LexA repressor.